Here is a 106-residue protein sequence, read N- to C-terminus: Large ribosomal subunit protein uL24 (106 aa).

This sequence belongs to the universal ribosomal protein uL24 family. Part of the 50S ribosomal subunit.

In terms of biological role, one of two assembly initiator proteins, it binds directly to the 5'-end of the 23S rRNA, where it nucleates assembly of the 50S subunit. Functionally, one of the proteins that surrounds the polypeptide exit tunnel on the outside of the subunit. In Bordetella avium (strain 197N), this protein is Large ribosomal subunit protein uL24.